A 712-amino-acid chain; its full sequence is BTB/POZ domain-containing protein 18 (712 aa).

The 69-residue stretch at 34 to 102 (CDVLLQAEGE…LYTSEMEVSQ (69 aa)) folds into the BTB domain. Disordered regions lie at residues 157–176 (VTPS…PCPL), 212–355 (RACP…EGQV), and 374–410 (ETPL…QEMS). The segment covering 218–228 (QEKNSSPSSHS) has biased composition (polar residues). The segment covering 229-238 (QEPRENKNDT) has biased composition (basic and acidic residues). Residues 277–288 (SKPSSILSGSSS) are compositionally biased toward low complexity. The span at 303–313 (VNKETPEDKPK) shows a compositional bias: basic and acidic residues. Positions 396–410 (PSGTQPFSSNEQEMS) are enriched in polar residues. Residues Ser-420, Ser-671, and Ser-672 each carry the phosphoserine modification. Disordered regions lie at residues 653–676 (KAGK…EEEE) and 691–712 (TTVP…DILT). Over residues 702 to 712 (SESETEVDILT) the composition is skewed to acidic residues.

It is found in the nucleus. Specifically required during spermatogenesis to promote expression of piRNA precursors. The piRNA metabolic process mediates the repression of transposable elements during meiosis by forming complexes composed of piRNAs and Piwi proteins and governs the methylation and subsequent repression of transposons, which is essential for the germline integrity. Acts by facilitating transcription elongation at piRNA loci during pachytene. The chain is BTB/POZ domain-containing protein 18 from Homo sapiens (Human).